Consider the following 446-residue polypeptide: Protein dyf-7 (446 aa).

The first 24 residues, 1 to 24 (MNQLWRASCLQVLITFLLIHQNKA), serve as a signal peptide directing secretion. In terms of domain architecture, ZP spans 35 to 295 (DCIADSFTVV…KTCYKKVSDS (261 aa)). An intrachain disulfide couples Cys211 to Cys273. The helical transmembrane segment at 377 to 397 (IPLIIMGSLASLLLFSAGAAI) threads the bilayer.

As to quaternary structure, monomer under reducing conditions. Homodimer under non-reducing conditions. May also form higher order oligomers. Proteolytically cleaved and secreted in vitro. In terms of tissue distribution, in the embryo, expressed in the excretory cell and, during dendrite formation, in the non-neuronal cells surrounding the sensory neurons, including hypodermal cells.

The protein resides in the cell membrane. The protein localises to the cell projection. Its subcellular location is the dendrite. It localises to the secreted. Required for permeability of amphid and phasmid neurons to external dyes, chemotaxis to ammonium chloride, avoidance of high osmotic stimuli, male mating and dauer formation. Along with dex-1, enables neurite growth and maintenance by anchoring amphid dendritic tips during neuron cell body migration in embryonic and larval development. This Caenorhabditis elegans protein is Protein dyf-7.